Here is a 479-residue protein sequence, read N- to C-terminus: 6-phosphogluconate dehydrogenase, decarboxylating (479 aa).

Residues 9 to 14 (GLGVMG), 32 to 34 (NRT), 77 to 79 (VQA), and Asn105 contribute to the NADP(+) site. Substrate contacts are provided by residues Asn105 and 131–133 (SGG). Lys186 serves as the catalytic Proton acceptor. 189 to 190 (HN) is a substrate binding site. Glu193 functions as the Proton donor in the catalytic mechanism. Residues Tyr194, Lys263, Arg290, Arg454, and His460 each contribute to the substrate site.

Belongs to the 6-phosphogluconate dehydrogenase family. In terms of assembly, homodimer.

The catalysed reaction is 6-phospho-D-gluconate + NADP(+) = D-ribulose 5-phosphate + CO2 + NADPH. Its pathway is carbohydrate degradation; pentose phosphate pathway; D-ribulose 5-phosphate from D-glucose 6-phosphate (oxidative stage): step 3/3. Catalyzes the oxidative decarboxylation of 6-phosphogluconate to ribulose 5-phosphate and CO(2), with concomitant reduction of NADP to NADPH. This chain is 6-phosphogluconate dehydrogenase, decarboxylating (GND), found in Trypanosoma brucei brucei.